A 169-amino-acid chain; its full sequence is uncharacterized protein (169 aa).

Asn13, Asn29, Asn39, and Asn48 each carry an N-linked (GlcNAc...) asparagine; by host glycan. Positions 109-111 (RGD) match the Cell attachment site motif. N-linked (GlcNAc...) asparagine; by host glycosylation is present at Asn135. Residues 145–165 (IYHMAIVYILIMYQIYILSLI) traverse the membrane as a helical segment.

It is found in the membrane. This is an uncharacterized protein from Acanthamoeba polyphaga (Amoeba).